Here is a 78-residue protein sequence, read N- to C-terminus: Beta-defensin 105A (78 aa).

Residues 1 to 27 (MALIRKTFYFLFAVFFVLVQLPSECQA) form the signal peptide. Cystine bridges form between Cys43/Cys74, Cys53/Cys67, and Cys57/Cys73.

Belongs to the beta-defensin family.

The protein localises to the secreted. In terms of biological role, has antimicrobial activity. In Pongo pygmaeus (Bornean orangutan), this protein is Beta-defensin 105A (DEFB105A).